The primary structure comprises 9159 residues: Halomucin (9159 aa).

A signal peptide spans 1–30; the sequence is MSQTAKPIFAVVVALIVLISGVAFIGSVSA. C-type lectin domains follow at residues 644-776 and 929-1060; these read TTGN…YLVE and YDGH…VEYG. Positions 1310–1332 are enriched in polar residues; that stretch reads QPQTVNDPDAVSTRNNNVGSNGL. Residues 1310–1351 are disordered; the sequence is QPQTVNDPDAVSTRNNNVGSNGLDSKIEDDQNNGADGNPHGT. Positions 1756 to 3380 are V-G-G-L motif-rich region; it reads VGGLIGESSG…GFNGEHVGGL (1625 aa). Disordered stretches follow at residues 3484–3514, 4878–4912, 6570–6589, 7047–7097, 7660–7702, 7888–7923, 8212–8237, and 8369–8614; these read GATAQSDATGSGTPGGATGYGSVGDTTPAPQ, ESYWDKGATDKSDATGSDTPATVSGYGSVGDTTPA, TDSATGSSVGGLIGSQSSGQ, TPTV…GINT, ATDS…NPGG, IDGDGLADDNEATGVPTDNDDDNDGIPDDEDQEPAL, STQQKRVGPLVSEDPSTVSWPSGAAD, and DSTA…GSST. Gly residues predominate over residues 3495–3505; the sequence is GTPGGATGYGS. Residues 4880–4890 are compositionally biased toward basic and acidic residues; it reads YWDKGATDKSD. Polar residues-rich tracts occupy residues 7048-7057 and 7068-7078; these read PTVTINSSSD and GEDSTSSNESS. Residues 7079–7092 show a composition bias toward acidic residues; the sequence is DGTESDQGDPEDDI. Over residues 7681–7698 the composition is skewed to polar residues; sequence VTGSTPTFVSSGTVTTPE. The 108-residue stretch at 7686–7793 folds into the Cadherin domain; that stretch reads PTFVSSGTVT…ITDVDEQPTG (108 aa). Composition is skewed to acidic residues over residues 7888 to 7898 and 7905 to 7920; these read IDGDGLADDNE and DNDDDNDGIPDDEDQE. Acidic residues predominate over residues 8378–8390; the sequence is ALEDDSSNQDSGD. Composition is skewed to low complexity over residues 8391-8529 and 8538-8548; these read DSSN…SSQN and SAAAVGAESGS. 2 stretches are compositionally biased toward gly residues: residues 8549 to 8566 and 8574 to 8608; these read EMGGETGGESQAGGGDGS and AGGGSSGGSSSGDSGGSSSGNSGGSSSGNSGGSSS.

Post-translationally, probably glycosylated with sugar containing sialic acid. This may further contribute to its overall negative charge, thereby creating an aqueous shield covering the cells.

It is found in the secreted. Its function is as follows. May protect the organism from desiccation stress. May also contribute to the rigidity and maintenance of the unique square cell morphology of H.walsbyi. The protein is Halomucin (hmu) of Haloquadratum walsbyi (strain DSM 16790 / HBSQ001).